We begin with the raw amino-acid sequence, 396 residues long: Pectinesterase (396 aa).

The signal sequence occupies residues 1-26; the sequence is MQSTTLYLKTAAFLGGCSLFAATALA. T174 is a binding site for substrate. D232 acts as the Proton donor in catalysis. Residue D259 is the Nucleophile of the active site. Residues R324 and W326 each coordinate substrate.

The protein belongs to the pectinesterase family.

Its subcellular location is the secreted. The enzyme catalyses [(1-&gt;4)-alpha-D-galacturonosyl methyl ester](n) + n H2O = [(1-&gt;4)-alpha-D-galacturonosyl](n) + n methanol + n H(+). Its pathway is glycan metabolism; pectin degradation; 2-dehydro-3-deoxy-D-gluconate from pectin: step 1/5. In terms of biological role, involved in maceration and soft-rotting of plant tissue. This is Pectinesterase (pme) from Ralstonia solanacearum (Pseudomonas solanacearum).